The primary structure comprises 209 residues: uncharacterized protein (209 aa).

3 helical membrane-spanning segments follow: residues 10 to 32 (AVVIILTRFMEAIAIIISIYLAF), 37 to 59 (LRYVLATAGVFLLSVLINLTGLI), and 64 to 86 (FIYFSLASIFLSALILTALILYV).

Its subcellular location is the cell membrane. This is an uncharacterized protein from Aquifex aeolicus (strain VF5).